The sequence spans 355 residues: Ornithine transcarbamylase, mitochondrial (355 aa).

The transit peptide at M1 to K35 directs the protein to the mitochondrion. K71 is subject to N6-acetyllysine; alternate. Position 71 is an N6-succinyllysine; alternate (K71). K81 bears the N6-succinyllysine mark. The residue at position 89 (K89) is an N6-acetyllysine; alternate. Position 89 is an N6-succinyllysine; alternate (K89). S91–R95 provides a ligand contact to carbamoyl phosphate. The residue at position 134 (S134) is a Phosphoserine. R142 is a carbamoyl phosphate binding site. Position 142 (R142) interacts with L-ornithine. Position 145 is an N6-acetyllysine; alternate (K145). At K145 the chain carries N6-succinyllysine; alternate. Residue H169 participates in carbamoyl phosphate binding. An L-ornithine-binding site is contributed by N200. K222, K232, and K239 each carry N6-acetyllysine; alternate. 3 positions are modified to N6-succinyllysine; alternate: K222, K232, and K239. N6-acetyllysine is present on K244. D264–S268 lines the L-ornithine pocket. An N6-succinyllysine mark is found at K275 and K290. K293 carries the post-translational modification N6-acetyllysine; alternate. K293 carries the N6-succinyllysine; alternate modification. H303 to P306 lines the L-ornithine pocket. C304 is an active-site residue. K308 bears the N6-acetyllysine; alternate mark. Residue K308 is modified to N6-succinyllysine; alternate. Position 331 (R331) interacts with carbamoyl phosphate. Residue R331 coordinates L-ornithine.

The protein belongs to the aspartate/ornithine carbamoyltransferase superfamily. OTCase family. As to quaternary structure, homotrimer. Acetylation at Lys-89 negatively regulates ornithine carbamoyltransferase activity in response to nutrient signals.

The protein resides in the mitochondrion matrix. It carries out the reaction carbamoyl phosphate + L-ornithine = L-citrulline + phosphate + H(+). It functions in the pathway nitrogen metabolism; urea cycle; L-citrulline from L-ornithine and carbamoyl phosphate: step 1/1. Its activity is regulated as follows. Negatively regulated by lysine acetylation. In terms of biological role, catalyzes the second step of the urea cycle, the condensation of carbamoyl phosphate with L-ornithine to form L-citrulline. The urea cycle ensures the detoxification of ammonia by converting it to urea for excretion. This is Ornithine transcarbamylase, mitochondrial from Ovis aries (Sheep).